Consider the following 363-residue polypeptide: UDP-N-acetylglucosamine--N-acetylmuramyl-(pentapeptide) pyrophosphoryl-undecaprenol N-acetylglucosamine transferase (363 aa).

UDP-N-acetyl-alpha-D-glucosamine contacts are provided by residues 12–14 (TGG), Asn-122, Arg-164, Ser-191, Ile-245, and Gln-290.

Belongs to the glycosyltransferase 28 family. MurG subfamily.

It localises to the cell membrane. It catalyses the reaction di-trans,octa-cis-undecaprenyl diphospho-N-acetyl-alpha-D-muramoyl-L-alanyl-D-glutamyl-meso-2,6-diaminopimeloyl-D-alanyl-D-alanine + UDP-N-acetyl-alpha-D-glucosamine = di-trans,octa-cis-undecaprenyl diphospho-[N-acetyl-alpha-D-glucosaminyl-(1-&gt;4)]-N-acetyl-alpha-D-muramoyl-L-alanyl-D-glutamyl-meso-2,6-diaminopimeloyl-D-alanyl-D-alanine + UDP + H(+). It functions in the pathway cell wall biogenesis; peptidoglycan biosynthesis. Cell wall formation. Catalyzes the transfer of a GlcNAc subunit on undecaprenyl-pyrophosphoryl-MurNAc-pentapeptide (lipid intermediate I) to form undecaprenyl-pyrophosphoryl-MurNAc-(pentapeptide)GlcNAc (lipid intermediate II). The polypeptide is UDP-N-acetylglucosamine--N-acetylmuramyl-(pentapeptide) pyrophosphoryl-undecaprenol N-acetylglucosamine transferase (Lawsonia intracellularis (strain PHE/MN1-00)).